The following is a 982-amino-acid chain: Glutamate [NMDA] receptor subunit 1 (982 aa).

Positions Met1–Ala22 are cleaved as a signal peptide. The Extracellular segment spans residues Gln23–Ser568. Residues Asn253, Asn309, Asn340, Asn392, Asn449, Asn476, and Asn496 are each glycosylated (N-linked (GlcNAc...) asparagine). Glycine contacts are provided by residues Pro525–Thr527 and Arg532. The helical transmembrane segment at Asn569–Leu589 threads the bilayer. At Asp590–Trp646 the chain is on the cytoplasmic side. A helical transmembrane segment spans residues Ala647–Leu667. Residues Glu668–Asn826 are Extracellular-facing. Residue Asn688 is glycosylated (N-linked (GlcNAc...) asparagine). 2 residues coordinate glycine: Ser698 and Asp742. The helical transmembrane segment at Met827–Ile847 threads the bilayer. At Glu848–Val982 the chain is on the cytoplasmic side. The disordered stretch occupies residues Leu948–Val982. The segment covering Gly972 to Val982 has biased composition (polar residues).

This sequence belongs to the glutamate-gated ion channel (TC 1.A.10.1) family. Forms a heteromeric NMDA channel with Nmdar2.

Its subcellular location is the cell membrane. The protein localises to the postsynaptic cell membrane. The protein resides in the postsynaptic density. Functionally, NMDA receptor subtype of glutamate-gated ion channels with high calcium permeability and voltage-dependent sensitivity to magnesium. Mediated by glycine. This protein plays a key role in synaptic plasticity, synaptogenesis, excitotoxicity, memory acquisition and learning. It mediates neuronal functions in glutamate neurotransmission. Is involved in the cell surface targeting of NMDA receptors. Plays a role in associative learning and in long-term memory consolidation. The chain is Glutamate [NMDA] receptor subunit 1 from Drosophila grimshawi (Hawaiian fruit fly).